Here is a 95-residue protein sequence, read N- to C-terminus: Large ribosomal subunit protein uL23 (95 aa).

This sequence belongs to the universal ribosomal protein uL23 family. As to quaternary structure, part of the 50S ribosomal subunit. Contacts protein L29, and trigger factor when it is bound to the ribosome.

Its function is as follows. One of the early assembly proteins it binds 23S rRNA. One of the proteins that surrounds the polypeptide exit tunnel on the outside of the ribosome. Forms the main docking site for trigger factor binding to the ribosome. The sequence is that of Large ribosomal subunit protein uL23 from Solibacter usitatus (strain Ellin6076).